We begin with the raw amino-acid sequence, 37 residues long: Large ribosomal subunit protein bL36 (37 aa).

This sequence belongs to the bacterial ribosomal protein bL36 family.

The protein is Large ribosomal subunit protein bL36 of Geobacillus kaustophilus (strain HTA426).